Here is an 87-residue protein sequence, read N- to C-terminus: MAHKKAGGSSRNGRDSESKRLGVKVYGGQAINAGGIIVRQRGTRMHAGENVGMGKDHTLFALVDGHVKFATKGADKKHTVIVVPAAA.

The disordered stretch occupies residues Met1–Leu21.

The protein belongs to the bacterial ribosomal protein bL27 family.

The chain is Large ribosomal subunit protein bL27 from Burkholderia multivorans (strain ATCC 17616 / 249).